Consider the following 326-residue polypeptide: MKRLNTVLKEDGVQTDLILLIRTILATSKEIAFRVSQGELAGVLGSTLNENIQGEVQKKLDVIANQLLKDILLDDNSVRTVASEEEDHAVGANPEGKFIVAFDPLDGSSNIDVNGQIGTIFTIYLARDDVPYDSDEQFNQLGANQVCAGYVLYGPSSLLVMSTGGPTRCYTLDSTHGGYLLTNNQLSVPEQSSEFAVNMANYRYWDEPTQVYFDKLLYTCKSFDKSSVRWNAAMVGDVHRILCRGGLFLYPQDNRAGNENGKIRLLYEANPLALLVENAGGKATSKGARILDIAPTNLHQRVPVVLGSIAPAEYFNSTVYNSNAKY.

4 residues coordinate Mg(2+): glutamate 84, aspartate 103, leucine 105, and aspartate 106. Substrate-binding positions include 106–109, asparagine 198, and lysine 262; that span reads DGSS. Glutamate 268 is a Mg(2+) binding site.

It belongs to the FBPase class 1 family. As to quaternary structure, homotetramer. Mg(2+) is required as a cofactor.

It localises to the cytoplasm. It catalyses the reaction beta-D-fructose 1,6-bisphosphate + H2O = beta-D-fructose 6-phosphate + phosphate. It participates in carbohydrate biosynthesis; gluconeogenesis. The polypeptide is Fructose-1,6-bisphosphatase class 1 2 (Pseudoalteromonas translucida (strain TAC 125)).